A 215-amino-acid polypeptide reads, in one-letter code: RNA pyrophosphohydrolase (215 aa).

The Nudix hydrolase domain maps to 6–149; sequence GFRPNVGIIL…KRDVYQLALT (144 aa). The short motif at 38–59 is the Nudix box element; it reads GGIKYGETPMQAMYRELHEETG.

It belongs to the Nudix hydrolase family. RppH subfamily. A divalent metal cation serves as cofactor.

In terms of biological role, accelerates the degradation of transcripts by removing pyrophosphate from the 5'-end of triphosphorylated RNA, leading to a more labile monophosphorylated state that can stimulate subsequent ribonuclease cleavage. This is RNA pyrophosphohydrolase from Burkholderia lata (strain ATCC 17760 / DSM 23089 / LMG 22485 / NCIMB 9086 / R18194 / 383).